A 516-amino-acid chain; its full sequence is Maturase K (516 aa).

This sequence belongs to the intron maturase 2 family. MatK subfamily.

It localises to the plastid. It is found in the chloroplast. Its function is as follows. Usually encoded in the trnK tRNA gene intron. Probably assists in splicing its own and other chloroplast group II introns. This Colchicum speciosum (Giant meadow saffron) protein is Maturase K.